The sequence spans 694 residues: Elongation factor G (694 aa).

Residues aspartate 9–leucine 288 form the tr-type G domain. Residues alanine 18–threonine 25, aspartate 82–histidine 86, and asparagine 136–aspartate 139 contribute to the GTP site.

It belongs to the TRAFAC class translation factor GTPase superfamily. Classic translation factor GTPase family. EF-G/EF-2 subfamily.

Its subcellular location is the cytoplasm. Its function is as follows. Catalyzes the GTP-dependent ribosomal translocation step during translation elongation. During this step, the ribosome changes from the pre-translocational (PRE) to the post-translocational (POST) state as the newly formed A-site-bound peptidyl-tRNA and P-site-bound deacylated tRNA move to the P and E sites, respectively. Catalyzes the coordinated movement of the two tRNA molecules, the mRNA and conformational changes in the ribosome. The protein is Elongation factor G of Chlamydia trachomatis serovar L2b (strain UCH-1/proctitis).